Consider the following 123-residue polypeptide: UPF0102 protein CLK_1817 (123 aa).

Belongs to the UPF0102 family.

This chain is UPF0102 protein CLK_1817, found in Clostridium botulinum (strain Loch Maree / Type A3).